The primary structure comprises 536 residues: Inactive phospholipase D5 (536 aa).

At 1–68 (MEIRQHEWLS…DKLEHSQQKC (68 aa)) the chain is on the cytoplasmic side. The chain crosses the membrane as a helical span at residues 69–89 (IVIFALVCCFAVLVALIFSAV). The Extracellular segment spans residues 90 to 536 (DIMGEDEDGL…NATGREPLSV (447 aa)). N121 carries N-linked (GlcNAc...) asparagine glycosylation. Residues 215 to 242 (NKGRLQSSFWIVDKQHVYIGSAGLDWRS) form the PLD phosphodiesterase 1 domain. An N-linked (GlcNAc...) asparagine glycan is attached at N302. A PLD phosphodiesterase 2 domain is found at 434 to 460 (FPKLNRNKYMVTDGAAYIGNFDWVGND). The tract at residues 503 to 536 (QPTKQPNCSSLSKLKSPSKQPAMANATGREPLSV) is disordered. The span at 511–521 (SSLSKLKSPSK) shows a compositional bias: low complexity.

The protein belongs to the phospholipase D family.

Its subcellular location is the membrane. The chain is Inactive phospholipase D5 (Pld5) from Mus musculus (Mouse).